The primary structure comprises 476 residues: Serine/threonine-protein kinase PknF (476 aa).

Phosphothreonine; by autocatalysis occurs at positions 8 and 13. Residues 12–279 form the Protein kinase domain; the sequence is FTIVRQLGSG…FARALGHRLG (268 aa). ATP contacts are provided by residues 18–26 and Lys41; that span reads LGSGGMGEV. Residue Asp137 is the Proton acceptor of the active site. Thr173, Thr175, and Thr287 each carry phosphothreonine; by autocatalysis. Ser290 bears the Phosphoserine; by autocatalysis mark. Residues 332–376 are disordered; it reads ADDERAAQPARTRTTTSAGTTTSVAPASTTRPAPTTPTTTGAADT. Low complexity predominate over residues 338-376; it reads AQPARTRTTTSAGTTTSVAPASTTRPAPTTPTTTGAADT.

This sequence belongs to the protein kinase superfamily. Ser/Thr protein kinase family. Post-translationally, dephosphorylated by PstP.

The enzyme catalyses L-seryl-[protein] + ATP = O-phospho-L-seryl-[protein] + ADP + H(+). The catalysed reaction is L-threonyl-[protein] + ATP = O-phospho-L-threonyl-[protein] + ADP + H(+). The protein is Serine/threonine-protein kinase PknF (pknF) of Mycobacterium bovis (strain ATCC BAA-935 / AF2122/97).